The following is a 360-amino-acid chain: Photosystem II protein D1 (360 aa).

The next 3 membrane-spanning stretches (helical) occupy residues 29–46, 118–133, and 142–156; these read YIGW…TATT, HFLL…EWEL, and WICV…AATA. Residue histidine 118 coordinates chlorophyll a. Tyrosine 126 serves as a coordination point for pheophytin a. [CaMn4O5] cluster is bound by residues aspartate 170 and glutamate 189. The chain crosses the membrane as a helical span at residues 197–218; the sequence is FHMAGVAGVFGGALFSAMHGSL. Histidine 198 provides a ligand contact to chlorophyll a. Residues histidine 215 and 264–265 each bind a quinone; that span reads SF. Histidine 215 serves as a coordination point for Fe cation. Residue histidine 272 coordinates Fe cation. Residues 274-288 form a helical membrane-spanning segment; the sequence is FLGLWPVVGIWLTSI. Histidine 332, glutamate 333, aspartate 342, and alanine 344 together coordinate [CaMn4O5] cluster. The propeptide occupies 345-360; it reads DNSLLPVASSSPSINS.

The protein belongs to the reaction center PufL/M/PsbA/D family. In terms of assembly, PSII is composed of 1 copy each of membrane proteins PsbA, PsbB, PsbC, PsbD, PsbE, PsbF, PsbH, PsbI, PsbJ, PsbK, PsbL, PsbM, PsbT, PsbY, PsbZ, Psb30/Ycf12, at least 3 peripheral proteins of the oxygen-evolving complex and a large number of cofactors. It forms dimeric complexes. The D1/D2 heterodimer binds P680, chlorophylls that are the primary electron donor of PSII, and subsequent electron acceptors. It shares a non-heme iron and each subunit binds pheophytin, quinone, additional chlorophylls, carotenoids and lipids. D1 provides most of the ligands for the Mn4-Ca-O5 cluster of the oxygen-evolving complex (OEC). There is also a Cl(-1) ion associated with D1 and D2, which is required for oxygen evolution. The PSII complex binds additional chlorophylls, carotenoids and specific lipids. serves as cofactor. Post-translationally, tyr-161 forms a radical intermediate that is referred to as redox-active TyrZ, YZ or Y-Z.

It is found in the plastid. The protein resides in the chloroplast thylakoid membrane. The enzyme catalyses 2 a plastoquinone + 4 hnu + 2 H2O = 2 a plastoquinol + O2. Photosystem II (PSII) is a light-driven water:plastoquinone oxidoreductase that uses light energy to abstract electrons from H(2)O, generating O(2) and a proton gradient subsequently used for ATP formation. It consists of a core antenna complex that captures photons, and an electron transfer chain that converts photonic excitation into a charge separation. The D1/D2 (PsbA/PsbD) reaction center heterodimer binds P680, the primary electron donor of PSII as well as several subsequent electron acceptors. This is Photosystem II protein D1 from Cyanidium caldarium (Red alga).